The chain runs to 431 residues: Chaperone SurA (431 aa).

An N-terminal signal peptide occupies residues 1–22; the sequence is MNLKKLLTSAVLSISLCQSAFA. PpiC domains are found at residues 173–274 and 283–383; these read AEEY…KVQD and TTET…QLLD.

The protein resides in the periplasm. The catalysed reaction is [protein]-peptidylproline (omega=180) = [protein]-peptidylproline (omega=0). Functionally, chaperone involved in the correct folding and assembly of outer membrane proteins. Recognizes specific patterns of aromatic residues and the orientation of their side chains, which are found more frequently in integral outer membrane proteins. May act in both early periplasmic and late outer membrane-associated steps of protein maturation. This chain is Chaperone SurA, found in Pseudoalteromonas translucida (strain TAC 125).